The sequence spans 158 residues: 6,7-dimethyl-8-ribityllumazine synthase (158 aa).

5-amino-6-(D-ribitylamino)uracil contacts are provided by residues Trp-28, 59 to 61 (TVE), and 81 to 83 (VVV). 86 to 87 (DT) contributes to the (2S)-2-hydroxy-3-oxobutyl phosphate binding site. The Proton donor role is filled by His-89. Phe-114 is a binding site for 5-amino-6-(D-ribitylamino)uracil. Arg-128 contacts (2S)-2-hydroxy-3-oxobutyl phosphate.

This sequence belongs to the DMRL synthase family.

The catalysed reaction is (2S)-2-hydroxy-3-oxobutyl phosphate + 5-amino-6-(D-ribitylamino)uracil = 6,7-dimethyl-8-(1-D-ribityl)lumazine + phosphate + 2 H2O + H(+). It functions in the pathway cofactor biosynthesis; riboflavin biosynthesis; riboflavin from 2-hydroxy-3-oxobutyl phosphate and 5-amino-6-(D-ribitylamino)uracil: step 1/2. Its function is as follows. Catalyzes the formation of 6,7-dimethyl-8-ribityllumazine by condensation of 5-amino-6-(D-ribitylamino)uracil with 3,4-dihydroxy-2-butanone 4-phosphate. This is the penultimate step in the biosynthesis of riboflavin. The sequence is that of 6,7-dimethyl-8-ribityllumazine synthase from Micrococcus luteus (strain ATCC 4698 / DSM 20030 / JCM 1464 / CCM 169 / CCUG 5858 / IAM 1056 / NBRC 3333 / NCIMB 9278 / NCTC 2665 / VKM Ac-2230) (Micrococcus lysodeikticus).